We begin with the raw amino-acid sequence, 387 residues long: Transcription termination/antitermination protein NusA (387 aa).

One can recognise an S1 motif domain in the interval 145–209; the sequence is GQVLTGVVTR…AKGPSLLVSR (65 aa). The 68-residue stretch at 312–379 folds into the KH domain; sequence AKKARVKVTK…ARERKAREEF (68 aa).

This sequence belongs to the NusA family. Monomer. Binds directly to the core enzyme of the DNA-dependent RNA polymerase and to nascent RNA.

The protein resides in the cytoplasm. Functionally, participates in both transcription termination and antitermination. The chain is Transcription termination/antitermination protein NusA from Thermus thermophilus (strain ATCC 27634 / DSM 579 / HB8).